The sequence spans 329 residues: Succinylglutamate desuccinylase (329 aa).

Zn(2+) contacts are provided by His53, Glu56, and His148. Glu211 is a catalytic residue.

This sequence belongs to the AspA/AstE family. Succinylglutamate desuccinylase subfamily. The cofactor is Zn(2+).

It carries out the reaction N-succinyl-L-glutamate + H2O = L-glutamate + succinate. Its pathway is amino-acid degradation; L-arginine degradation via AST pathway; L-glutamate and succinate from L-arginine: step 5/5. Functionally, transforms N(2)-succinylglutamate into succinate and glutamate. This chain is Succinylglutamate desuccinylase, found in Erwinia tasmaniensis (strain DSM 17950 / CFBP 7177 / CIP 109463 / NCPPB 4357 / Et1/99).